Reading from the N-terminus, the 131-residue chain is MAKRNVTAKKKVVKKNIARGVVYISATFNNTNITITDEMGNVICWSTAGGLGFKGSKKSTPYAAQQAVESALSKAKEHGVKEVGIKVQGPGSGRETAIKSVGATEGIKVLWIKDITPLPHNGCRPPKRRRV.

The protein belongs to the universal ribosomal protein uS11 family. In terms of assembly, part of the 30S ribosomal subunit. Interacts with proteins S7 and S18. Binds to IF-3.

Functionally, located on the platform of the 30S subunit, it bridges several disparate RNA helices of the 16S rRNA. Forms part of the Shine-Dalgarno cleft in the 70S ribosome. The sequence is that of Small ribosomal subunit protein uS11 from Helicobacter pylori (strain ATCC 700392 / 26695) (Campylobacter pylori).